The sequence spans 142 residues: Negative cofactor 2 complex subunit alpha (142 aa).

Polar residues predominate over residues 1-11 (MADQVPVTTQL). The disordered stretch occupies residues 1–43 (MADQVPVTTQLPPIKPEHEVPLDAGGSPVGNMGTNSNNNNELG). Residue S27 is modified to Phosphoserine. Residues 29-137 (VGNMGTNSNN…LCVEEGQTQP (109 aa)) enclose the Histone-fold domain. Phosphoserine is present on S141.

It belongs to the NC2 alpha/DRAP1 family. As to quaternary structure, component of the NC2 (negative cofactor 2) complex composed of BUR6 and NCB2. The NC2 complex associates with SPT15/TBP. Interacts with SPT15/TBP.

It localises to the nucleus. Component of the NC2 complex which represses RNA polymerase II transcription through binding to SPT15/TBP and thereby inhibiting the assembly of the preinitiation complex. The NC2 complex may also mediate transcriptional activation from TATA-driven promoters through association with SPT15/TBP. In Saccharomyces cerevisiae (strain ATCC 204508 / S288c) (Baker's yeast), this protein is Negative cofactor 2 complex subunit alpha (BUR6).